The primary structure comprises 545 residues: Acetyltransferase BOT5 (545 aa).

A signal peptide spans 1–19; the sequence is MATIPLFFSLILFLRLYHA. N70 and N198 each carry an N-linked (GlcNAc...) asparagine glycan. Catalysis depends on H208, which acts as the Proton acceptor. N346 and N445 each carry an N-linked (GlcNAc...) asparagine glycan. The interval 466-493 is disordered; sequence GAGNQKSSSTRKAARHTEPTQAQTQPGR.

This sequence belongs to the plant acyltransferase family.

The protein operates within secondary metabolite biosynthesis. In terms of biological role, acetyltransferase; part of the gene cluster that mediates the biosynthesis of botrydial. Botrydial is necessary for colonization of plant tissue by the T4 strain. It is a strain-dependent virulence factor since highly aggressive strains like SAS56 or B05 still retain substantial virulence when botrydial synthesis is impaired, since they produce also botcinic acid. The first step of botrydial biosynthesis is performed by the sesquiterpene synthase BOT2 which catalyzes the cyclization of farnesyl diphosphate (FPP) to presilphiperfolan-8-beta-ol (PSP). The cytochrome P450 monooxygenase BOT4 then catalyzes the hydroxylation at C-4 to give a probotryane intermediate. Acetylation of the hydroxyl at C-4 is carried out by the acetyltransferase BOT5, followed by the combined action of the P450 monooxygenases BOT3 and BOT1, to yield finally the glycol, via the regio- and stereospecific hydroxylations at C-10 and C-15 of the probotryane intermediates, respectively. The cleavage of the C10-C15 bond of probotryane skeleton is an intriguing and chemically important reaction, which could be mediated by some of the monooxygenases or by a combination of them. It is possible that either BOT3 or BOT1 would oxidize either the 10- or the 15-hydroxy group to the hydroperoxide derivative, which would then undergo heterolytic fragmentation to give the dialdehyde botrydial. Finally, the dehydrogenase BOT7 might be involved in the conversion of botrydial to dihydrobotrydial. The protein is Acetyltransferase BOT5 of Botryotinia fuckeliana (Noble rot fungus).